Reading from the N-terminus, the 164-residue chain is MAKKNAKKSKNSSASIARNKRATFDYKFEEKMEAGLSLMGWEVKSIRMGKVNLSESYVFMREGEAFLFGCTIAPLNTASTHVVCDPMRSRKLLLKRKELDKLQGLVDRKGYSIVPISMYWQKGAWVKIEIGLGKGKKEHDKRDDTKDREWQIEKARTMKKAVQQ.

This sequence belongs to the SmpB family.

The protein resides in the cytoplasm. Its function is as follows. Required for rescue of stalled ribosomes mediated by trans-translation. Binds to transfer-messenger RNA (tmRNA), required for stable association of tmRNA with ribosomes. tmRNA and SmpB together mimic tRNA shape, replacing the anticodon stem-loop with SmpB. tmRNA is encoded by the ssrA gene; the 2 termini fold to resemble tRNA(Ala) and it encodes a 'tag peptide', a short internal open reading frame. During trans-translation Ala-aminoacylated tmRNA acts like a tRNA, entering the A-site of stalled ribosomes, displacing the stalled mRNA. The ribosome then switches to translate the ORF on the tmRNA; the nascent peptide is terminated with the 'tag peptide' encoded by the tmRNA and targeted for degradation. The ribosome is freed to recommence translation, which seems to be the essential function of trans-translation. This chain is SsrA-binding protein, found in Shewanella woodyi (strain ATCC 51908 / MS32).